The chain runs to 174 residues: MARKNQKAPWEPEEEIIWVSKSEMKRDMEELQKLGEELVGLKPAVLDKFPLSEDLREAVADAQRFKNEARRRQLQRIGKLMRYEDPEPIQAALDKIRNKHSQATAALHKLEALRDRVVEEGDKAIDDVMELYPEADRQRLRQLARQAAKEKKAGKPAKSYREIFQILKAFEEEM.

Belongs to the DarP family.

It is found in the cytoplasm. Functionally, member of a network of 50S ribosomal subunit biogenesis factors which assembles along the 30S-50S interface, preventing incorrect 23S rRNA structures from forming. Promotes peptidyl transferase center (PTC) maturation. In Vibrio campbellii (strain ATCC BAA-1116), this protein is Dual-action ribosomal maturation protein DarP.